The following is a 605-amino-acid chain: Probable serine/threonine-protein kinase DDB_G0286481 (605 aa).

A helical transmembrane segment spans residues 5 to 25 (YQIFFLLYLLCILYVISCGYI). A glycan (N-linked (GlcNAc...) asparagine) is linked at Asn-53. Low complexity-rich tracts occupy residues 54-81 (SSNN…NNNN) and 89-104 (NCNN…NKSN). The segment at 54 to 170 (SSNNNNNNNN…LGGSMGSGSQ (117 aa)) is disordered. N-linked (GlcNAc...) asparagine glycans are attached at residues Asn-92, Asn-93, Asn-97, and Asn-101. Positions 105–123 (IKNKQHHHHSNFRNRRGKS) are enriched in basic residues. N-linked (GlcNAc...) asparagine glycosylation occurs at Asn-127. A compositionally biased stretch (polar residues) spans 144–155 (QSSSYDTSELHQ). N-linked (GlcNAc...) asparagine glycosylation is present at Asn-280. The region spanning 312 to 597 (YEVIQKIGRG…AKEAMKHPYF (286 aa)) is the Protein kinase domain. Residues 318-326 (IGRGKYSEV) and Lys-341 contribute to the ATP site. N-linked (GlcNAc...) asparagine glycosylation is present at Asn-390. Asp-429 acts as the Proton acceptor in catalysis. N-linked (GlcNAc...) asparagine glycosylation occurs at Asn-601.

This sequence belongs to the protein kinase superfamily. CMGC Ser/Thr protein kinase family.

It is found in the membrane. It carries out the reaction L-seryl-[protein] + ATP = O-phospho-L-seryl-[protein] + ADP + H(+). It catalyses the reaction L-threonyl-[protein] + ATP = O-phospho-L-threonyl-[protein] + ADP + H(+). The chain is Probable serine/threonine-protein kinase DDB_G0286481 from Dictyostelium discoideum (Social amoeba).